The primary structure comprises 89 residues: uncharacterized protein (89 aa).

This is an uncharacterized protein from Geobacillus stearothermophilus (Bacillus stearothermophilus).